A 362-amino-acid chain; its full sequence is Peptide chain release factor 1 (362 aa).

Glutamine 235 bears the N5-methylglutamine mark.

It belongs to the prokaryotic/mitochondrial release factor family. In terms of processing, methylated by PrmC. Methylation increases the termination efficiency of RF1.

The protein localises to the cytoplasm. In terms of biological role, peptide chain release factor 1 directs the termination of translation in response to the peptide chain termination codons UAG and UAA. The sequence is that of Peptide chain release factor 1 from Acinetobacter baumannii (strain ACICU).